Consider the following 440-residue polypeptide: Transposon Ty1-PR2 Gag polyprotein (440 aa).

Polar residues-rich tracts occupy residues 1 to 10 (MESQQLSNYP), 48 to 60 (TKAN…TPAS), and 127 to 152 (QSQF…GNTF). Disordered stretches follow at residues 1–93 (MESQ…MMTQ), 126–173 (PQSQ…RPPP), and 352–440 (GSRN…PETY). Low complexity predominate over residues 153 to 165 (TDSSSADSDMTST). The interval 299-401 (NNGIHINNKV…NSKSKTARAH (103 aa)) is RNA-binding. Low complexity predominate over residues 402–418 (NVSTSNNSPSTDNDSIS). Residue S416 is modified to Phosphoserine. The span at 419–428 (KSTTEPIQLN) shows a compositional bias: polar residues. Positions 429–440 (NKHDLHLRPETY) are enriched in basic and acidic residues.

As to quaternary structure, homotrimer.

The protein resides in the cytoplasm. Capsid protein (CA) is the structural component of the virus-like particle (VLP), forming the shell that encapsulates the retrotransposons dimeric RNA genome. The particles are assembled from trimer-clustered units and there are holes in the capsid shells that allow for the diffusion of macromolecules. CA also has nucleocapsid-like chaperone activity, promoting primer tRNA(i)-Met annealing to the multipartite primer-binding site (PBS), dimerization of Ty1 RNA and initiation of reverse transcription. In Saccharomyces cerevisiae (strain ATCC 204508 / S288c) (Baker's yeast), this protein is Transposon Ty1-PR2 Gag polyprotein (TY1A-PR2).